Here is a 140-residue protein sequence, read N- to C-terminus: Large ribosomal subunit protein uL11 (140 aa).

Belongs to the universal ribosomal protein uL11 family. Part of the ribosomal stalk of the 50S ribosomal subunit. Interacts with L10 and the large rRNA to form the base of the stalk. L10 forms an elongated spine to which L12 dimers bind in a sequential fashion forming a multimeric L10(L12)X complex. In terms of processing, one or more lysine residues are methylated.

In terms of biological role, forms part of the ribosomal stalk which helps the ribosome interact with GTP-bound translation factors. This is Large ribosomal subunit protein uL11 from Campylobacter hominis (strain ATCC BAA-381 / DSM 21671 / CCUG 45161 / LMG 19568 / NCTC 13146 / CH001A).